The chain runs to 191 residues: MEGFFWKTLLVVGALAIGGTSSLPHKPLTYEEAVDLAVSIYNSKSGEDSLYRLLEAVPPPEWDPLSESNQELNFTIKETVCLVAEERSLEECDFQEDGAIMGCTGYYFFGESPPVLVLTCKPVGEEEEQKQEEGNEEEKEVEKEEKEEDEKDQPRRVKRFKKFFKKLKNSVKKRAKKFFKKPRVIGVSIPF.

Positions 1-22 (MEGFFWKTLLVVGALAIGGTSS) are cleaved as a signal peptide. The propeptide occupies 23-161 (LPHKPLTYEE…DQPRRVKRFK (139 aa)). 2 disulfides stabilise this stretch: C81–C92 and C103–C120. Positions 125–151 (EEEEQKQEEGNEEEKEVEKEEKEEDEK) are enriched in acidic residues. The tract at residues 125–154 (EEEEQKQEEGNEEEKEVEKEEKEEDEKDQP) is disordered.

Belongs to the cathelicidin family. As to expression, expressed by the venom gland.

It localises to the secreted. Its subcellular location is the target cell membrane. Its function is as follows. Potent antimicrobial peptide against Gram-negative (MIC=0.25 ug/ml against E.coli ATCC 25922, MIC=0.5 ug/ml against P.aeruginosa) and Gram-positive bacteria (MIC=64 ug/ml against E.faecalis, MIC=64 ug/ml against S.aureus). Adopts an amphipathic alpha helical conformation, that may allow to partition into the target membrane. Low hemolytic activities have been observed on mammalian cells. The polypeptide is Cathelicidin-related peptide Oh-Cath (Ophiophagus hannah (King cobra)).